The following is a 242-amino-acid chain: 3-dehydroquinate dehydratase (242 aa).

3-dehydroquinate contacts are provided by residues 39–41 (EVR) and R73. The Proton donor/acceptor role is filled by H135. Catalysis depends on K162, which acts as the Schiff-base intermediate with substrate. 3-dehydroquinate is bound by residues R203 and Q228.

It belongs to the type-I 3-dehydroquinase family. In terms of assembly, homodimer.

It carries out the reaction 3-dehydroquinate = 3-dehydroshikimate + H2O. Its pathway is metabolic intermediate biosynthesis; chorismate biosynthesis; chorismate from D-erythrose 4-phosphate and phosphoenolpyruvate: step 3/7. In terms of biological role, involved in the third step of the chorismate pathway, which leads to the biosynthesis of aromatic amino acids. Catalyzes the cis-dehydration of 3-dehydroquinate (DHQ) and introduces the first double bond of the aromatic ring to yield 3-dehydroshikimate. The protein is 3-dehydroquinate dehydratase of Methanosarcina acetivorans (strain ATCC 35395 / DSM 2834 / JCM 12185 / C2A).